Reading from the N-terminus, the 153-residue chain is Ribonuclease H (153 aa).

One can recognise an RNase H type-1 domain in the interval 4 to 145; the sequence is SVDSVELFTD…ADQLANRGVD (142 aa). Mg(2+)-binding residues include Asp13, Glu51, Asp73, and Asp137.

This sequence belongs to the RNase H family. As to quaternary structure, monomer. Mg(2+) serves as cofactor.

It is found in the cytoplasm. It carries out the reaction Endonucleolytic cleavage to 5'-phosphomonoester.. Functionally, endonuclease that specifically degrades the RNA of RNA-DNA hybrids. This Pseudomonas fluorescens (strain Pf0-1) protein is Ribonuclease H.